Here is a 282-residue protein sequence, read N- to C-terminus: tRNA (guanine-N(1)-)-methyltransferase (282 aa).

S-adenosyl-L-methionine contacts are provided by residues Gly157 and 177–182 (VGDYIL).

This sequence belongs to the RNA methyltransferase TrmD family. In terms of assembly, homodimer.

Its subcellular location is the cytoplasm. The enzyme catalyses guanosine(37) in tRNA + S-adenosyl-L-methionine = N(1)-methylguanosine(37) in tRNA + S-adenosyl-L-homocysteine + H(+). Functionally, specifically methylates guanosine-37 in various tRNAs. The protein is tRNA (guanine-N(1)-)-methyltransferase of Rickettsia bellii (strain RML369-C).